The following is a 145-amino-acid chain: Mite group 2 allergen Eur m 2 (145 aa).

A signal peptide spans 1–16 (MYKILCLSLLVAAVAA). Intrachain disulfides connect Cys-24/Cys-135, Cys-37/Cys-43, and Cys-89/Cys-94.

This sequence belongs to the NPC2 family.

It is found in the secreted. The polypeptide is Mite group 2 allergen Eur m 2 (EURM2) (Euroglyphus maynei (Mayne's house dust mite)).